Here is a 337-residue protein sequence, read N- to C-terminus: ADP-ribosylation factor GTPase-activating protein AGD12 (337 aa).

The Arf-GAP domain occupies 15–137 (KRRIRDLLTQ…EFLKPSLRIT (123 aa)). The C4-type zinc finger occupies 30-53 (CADCGAPDPKWASANIGVFICLKC). The region spanning 164–281 (TNSSSQQPQL…AMAFGDPEMF (118 aa)) is the C2 domain. Residues aspartate 250, serine 253, and aspartate 256 each contribute to the Ca(2+) site.

It depends on Ca(2+) as a cofactor. In terms of tissue distribution, expressed in roots, leaves, flowers and siliques. Low levels of expression in seeds and stems.

It localises to the golgi apparatus. The protein localises to the cell membrane. In terms of biological role, GTPase-activating protein (GAP) for ADP ribosylation factor (ARF). Binds phosphatidylinositol 3-monophosohate (PI-3-P) and anionic phospholipids. This is ADP-ribosylation factor GTPase-activating protein AGD12 (AGD12) from Arabidopsis thaliana (Mouse-ear cress).